The sequence spans 485 residues: Glutamyl-tRNA(Gln) amidotransferase subunit A (485 aa).

Residues K74 and S149 each act as charge relay system in the active site. S173 serves as the catalytic Acyl-ester intermediate.

The protein belongs to the amidase family. GatA subfamily. In terms of assembly, heterotrimer of A, B and C subunits.

It carries out the reaction L-glutamyl-tRNA(Gln) + L-glutamine + ATP + H2O = L-glutaminyl-tRNA(Gln) + L-glutamate + ADP + phosphate + H(+). Allows the formation of correctly charged Gln-tRNA(Gln) through the transamidation of misacylated Glu-tRNA(Gln) in organisms which lack glutaminyl-tRNA synthetase. The reaction takes place in the presence of glutamine and ATP through an activated gamma-phospho-Glu-tRNA(Gln). This is Glutamyl-tRNA(Gln) amidotransferase subunit A from Synechococcus sp. (strain RCC307).